The chain runs to 145 residues: Putative pre-16S rRNA nuclease (145 aa).

The protein belongs to the YqgF nuclease family.

It is found in the cytoplasm. Could be a nuclease involved in processing of the 5'-end of pre-16S rRNA. This is Putative pre-16S rRNA nuclease from Limosilactobacillus fermentum (strain NBRC 3956 / LMG 18251) (Lactobacillus fermentum).